The sequence spans 372 residues: tRNA-specific 2-thiouridylase MnmA (372 aa).

ATP is bound by residues 11 to 18 (GMSGGVDS) and M37. An interaction with target base in tRNA region spans residues 97–99 (NPD). C102 functions as the Nucleophile in the catalytic mechanism. Cysteines 102 and 199 form a disulfide. G126 serves as a coordination point for ATP. The interaction with tRNA stretch occupies residues 149 to 151 (KDQ). The active-site Cysteine persulfide intermediate is C199. The tract at residues 309–310 (RY) is interaction with tRNA.

It belongs to the MnmA/TRMU family.

It is found in the cytoplasm. It catalyses the reaction S-sulfanyl-L-cysteinyl-[protein] + uridine(34) in tRNA + AH2 + ATP = 2-thiouridine(34) in tRNA + L-cysteinyl-[protein] + A + AMP + diphosphate + H(+). Its function is as follows. Catalyzes the 2-thiolation of uridine at the wobble position (U34) of tRNA, leading to the formation of s(2)U34. This chain is tRNA-specific 2-thiouridylase MnmA, found in Staphylococcus aureus (strain Mu50 / ATCC 700699).